Here is a 68-residue protein sequence, read N- to C-terminus: Figainin 1 (68 aa).

A signal peptide spans 1 to 22; sequence MAFLKKSLFLVLFLGLVSLSIG. The segment at 23–45 is disordered; the sequence is EEEKREEEEKNEEGANQEENAEN. Residues 23 to 47 constitute a propeptide that is removed on maturation; sequence EEEKREEEEKNEEGANQEENAENKE. Positions 26–42 are enriched in acidic residues; that stretch reads KREEEEKNEEGANQEEN. Position 67 is a lysine amide (K67).

In terms of tissue distribution, expressed by the skin glands.

The protein resides in the secreted. Functionally, antimicrobial peptide that displays antibacterial and antiprotozoal activity. Exhibits antibacterial activity against the Gram-positive bacteria S.epidermidis ATCC 12228 (MIC=2 uM), E.casseliflavus ATCC 700327 (MIC=16 uM), S.aureus ATCC 25923 (MIC=4 uM) and E.faecalis ATCC 29212 (MIC=8 uM), and the Gram-negative bacteria E.coli ATCC 25922 (MIC=16 uM) and K.pneumoniae ATCC 13883 (MIC=4 uM). Displays antiprotozoal activity against the epimastigote form of T.cruzi (IC(50)=15.9 uM). Does not show antimicrobial activity against the Gram-negative bacterium P.aeruginosa ATCC 27853, or the fungi C.albicans ATCC 90028 and C.parapsilosis ATCC 22019. Shows high cytolytic activity against human erythrocytes (HC(50)=10 uM), and displays anti-proliferative effects against various cancer cell lines including MCF-7 breast cancer cells (IC(50)=13.7 uM), HeLa cervical adenocarcinoma cells (IC(50)=11.1 uM) and B16F10 murine melanoma cells (IC(50)=10.5 uM). This Boana raniceps (Chaco tree frog) protein is Figainin 1.